An 868-amino-acid polypeptide reads, in one-letter code: Translation initiation factor IF-2 (868 aa).

The segment at 201 to 269 (KEEVKPEKVS…GTEKSDKYRE (69 aa)) is disordered. Residues 249–260 (RGGRSKFKKKKG) show a composition bias toward basic residues. The tr-type G domain occupies 368-537 (GRAPVVTIMG…LLQSEVLELK (170 aa)). The G1 stretch occupies residues 377 to 384 (GHVDHGKT). GTP is bound at residue 377–384 (GHVDHGKT). A G2 region spans residues 402–406 (GITQH). The segment at 423-426 (DTPG) is G3. GTP-binding positions include 423–427 (DTPGH) and 477–480 (NKMD). The G4 stretch occupies residues 477–480 (NKMD). The G5 stretch occupies residues 513–515 (SAK).

Belongs to the TRAFAC class translation factor GTPase superfamily. Classic translation factor GTPase family. IF-2 subfamily.

The protein localises to the cytoplasm. Functionally, one of the essential components for the initiation of protein synthesis. Protects formylmethionyl-tRNA from spontaneous hydrolysis and promotes its binding to the 30S ribosomal subunits. Also involved in the hydrolysis of GTP during the formation of the 70S ribosomal complex. This is Translation initiation factor IF-2 from Legionella pneumophila (strain Corby).